The chain runs to 350 residues: D-alanine--D-alanine ligase (350 aa).

One can recognise an ATP-grasp domain in the interval 134-337 (KIFAAQRGVK…LPKKHSIKVS (204 aa)). 160-212 (IAYPIILKPARLGSSIGVSVINEEKELDYGRDLAFEYDDTIIAESFKSGVKEY) is a binding site for ATP. 3 residues coordinate Mg(2+): Asp-289, Glu-301, and Asn-303.

It belongs to the D-alanine--D-alanine ligase family. It depends on Mg(2+) as a cofactor. Requires Mn(2+) as cofactor.

It is found in the cytoplasm. It carries out the reaction 2 D-alanine + ATP = D-alanyl-D-alanine + ADP + phosphate + H(+). The protein operates within cell wall biogenesis; peptidoglycan biosynthesis. Its function is as follows. Cell wall formation. This Helicobacter hepaticus (strain ATCC 51449 / 3B1) protein is D-alanine--D-alanine ligase.